The chain runs to 592 residues: Arginine--tRNA ligase (592 aa).

Positions 134–144 (ANPTGPLHVGH) match the 'HIGH' region motif.

The protein belongs to the class-I aminoacyl-tRNA synthetase family. In terms of assembly, monomer.

Its subcellular location is the cytoplasm. It carries out the reaction tRNA(Arg) + L-arginine + ATP = L-arginyl-tRNA(Arg) + AMP + diphosphate. The sequence is that of Arginine--tRNA ligase from Coxiella burnetii (strain RSA 493 / Nine Mile phase I).